Consider the following 359-residue polypeptide: Phosphate acyltransferase (359 aa).

The interval 338-359 (AGGVQSAPETEAPGAHPSPHVA) is disordered.

This sequence belongs to the PlsX family. In terms of assembly, homodimer. Probably interacts with PlsY.

It localises to the cytoplasm. The enzyme catalyses a fatty acyl-[ACP] + phosphate = an acyl phosphate + holo-[ACP]. It participates in lipid metabolism; phospholipid metabolism. In terms of biological role, catalyzes the reversible formation of acyl-phosphate (acyl-PO(4)) from acyl-[acyl-carrier-protein] (acyl-ACP). This enzyme utilizes acyl-ACP as fatty acyl donor, but not acyl-CoA. In Cupriavidus taiwanensis (strain DSM 17343 / BCRC 17206 / CCUG 44338 / CIP 107171 / LMG 19424 / R1) (Ralstonia taiwanensis (strain LMG 19424)), this protein is Phosphate acyltransferase.